A 357-amino-acid chain; its full sequence is 3-dehydroquinate synthase (357 aa).

NAD(+) contacts are provided by residues 99-103 (GATGD), 123-124 (TT), Lys-135, Lys-144, and 162-165 (FLET). Positions 177, 247, and 261 each coordinate Zn(2+).

Belongs to the sugar phosphate cyclases superfamily. Dehydroquinate synthase family. Co(2+) is required as a cofactor. It depends on Zn(2+) as a cofactor. NAD(+) serves as cofactor.

It is found in the cytoplasm. It catalyses the reaction 7-phospho-2-dehydro-3-deoxy-D-arabino-heptonate = 3-dehydroquinate + phosphate. It functions in the pathway metabolic intermediate biosynthesis; chorismate biosynthesis; chorismate from D-erythrose 4-phosphate and phosphoenolpyruvate: step 2/7. Functionally, catalyzes the conversion of 3-deoxy-D-arabino-heptulosonate 7-phosphate (DAHP) to dehydroquinate (DHQ). In Macrococcus caseolyticus (strain JCSC5402) (Macrococcoides caseolyticum), this protein is 3-dehydroquinate synthase.